Consider the following 158-residue polypeptide: Phosphopantetheine adenylyltransferase (158 aa).

Belongs to the eukaryotic CoaD family.

The protein resides in the cytoplasm. It catalyses the reaction (R)-4'-phosphopantetheine + ATP + H(+) = 3'-dephospho-CoA + diphosphate. It participates in cofactor biosynthesis; coenzyme A biosynthesis. Reversibly transfers an adenylyl group from ATP to 4'-phosphopantetheine, yielding dephospho-CoA (dPCoA) and pyrophosphate. The chain is Phosphopantetheine adenylyltransferase from Pyrococcus horikoshii (strain ATCC 700860 / DSM 12428 / JCM 9974 / NBRC 100139 / OT-3).